The chain runs to 99 residues: L-rhamnose mutarotase (99 aa).

Tyr18 serves as a coordination point for substrate. His22 acts as the Proton donor in catalysis. Residues Tyr41 and 76–77 (WW) each bind substrate.

This sequence belongs to the rhamnose mutarotase family. In terms of assembly, homodimer.

The protein resides in the cytoplasm. It catalyses the reaction alpha-L-rhamnose = beta-L-rhamnose. Its pathway is carbohydrate metabolism; L-rhamnose metabolism. Functionally, involved in the anomeric conversion of L-rhamnose. In Shigella boydii serotype 18 (strain CDC 3083-94 / BS512), this protein is L-rhamnose mutarotase.